The primary structure comprises 794 residues: Ent-copalyl diphosphate synthase 2 (794 aa).

The transit peptide at 1–35 (MSSSSNVTSLPRLTTAGGVFPREMVRVHSSCNILR) directs the protein to the chloroplast. Lys238 contacts substrate. Residues Asp369 and Asp371 each contribute to the Mg(2+) site. Residues 369–372 (DVDD) carry the DXDD motif motif. Lys455 serves as a coordination point for substrate.

Belongs to the terpene synthase family. Tpsc subfamily. Requires Mg(2+) as cofactor. Expressed in leaves.

The protein localises to the plastid. It is found in the chloroplast. It carries out the reaction (2E,6E,10E)-geranylgeranyl diphosphate = ent-copalyl diphosphate. It functions in the pathway secondary metabolite biosynthesis; terpenoid biosynthesis. In terms of biological role, involved in the biosynthesis of ent-kaurene diterpenoids natural products such as oridonin, miltiradiene, eriocalyxin B and nezukol, known to exhibit antitumor, anti-inflammatory and antibacterial activities. Catalyzes the conversion of (2E,6E,10E)-geranylgeranyl diphosphate (GGPP) to ent-copalyl diphosphate (ent-CPP). This chain is Ent-copalyl diphosphate synthase 2, found in Isodon eriocalyx (Plectranthus eriocalyx).